A 94-amino-acid chain; its full sequence is Integration host factor subunit beta (94 aa).

This sequence belongs to the bacterial histone-like protein family. Heterodimer of an alpha and a beta chain.

This protein is one of the two subunits of integration host factor, a specific DNA-binding protein that functions in genetic recombination as well as in transcriptional and translational control. The protein is Integration host factor subunit beta of Escherichia fergusonii (strain ATCC 35469 / DSM 13698 / CCUG 18766 / IAM 14443 / JCM 21226 / LMG 7866 / NBRC 102419 / NCTC 12128 / CDC 0568-73).